The chain runs to 76 residues: Transcription attenuation protein MtrB (76 aa).

This sequence belongs to the MtrB family. Oligomer of 11 identical subunits arranged in doughnut-like structure.

In terms of biological role, required for transcription attenuation control in the Trp operon. This trans-acting factor seems to recognize a 10 bases nucleotide sequence in the Trp leader transcript causing transcription termination. Binds the leader RNA only in presence of L-tryptophan. The sequence is that of Transcription attenuation protein MtrB (mtrB) from Bacillus pumilus (Bacillus mesentericus).